The sequence spans 325 residues: GMP reductase (325 aa).

The active-site Thioimidate intermediate is Cys174. 203 to 226 is an NADP(+) binding site; it reads IIADGGIRTHGDIAKSIRFGATMV.

Belongs to the IMPDH/GMPR family. GuaC type 2 subfamily.

The enzyme catalyses IMP + NH4(+) + NADP(+) = GMP + NADPH + 2 H(+). Its function is as follows. Catalyzes the irreversible NADPH-dependent deamination of GMP to IMP. It functions in the conversion of nucleobase, nucleoside and nucleotide derivatives of G to A nucleotides, and in maintaining the intracellular balance of A and G nucleotides. The chain is GMP reductase from Helicobacter pylori (strain G27).